A 217-amino-acid chain; its full sequence is Phosphatidylserine decarboxylase proenzyme (217 aa).

S183 acts as the Schiff-base intermediate with substrate; via pyruvic acid in catalysis. The residue at position 183 (S183) is a Pyruvic acid (Ser); by autocatalysis.

Belongs to the phosphatidylserine decarboxylase family. PSD-A subfamily. In terms of assembly, heterodimer of a large membrane-associated beta subunit and a small pyruvoyl-containing alpha subunit. Pyruvate is required as a cofactor. In terms of processing, is synthesized initially as an inactive proenzyme. Formation of the active enzyme involves a self-maturation process in which the active site pyruvoyl group is generated from an internal serine residue via an autocatalytic post-translational modification. Two non-identical subunits are generated from the proenzyme in this reaction, and the pyruvate is formed at the N-terminus of the alpha chain, which is derived from the carboxyl end of the proenzyme. The post-translation cleavage follows an unusual pathway, termed non-hydrolytic serinolysis, in which the side chain hydroxyl group of the serine supplies its oxygen atom to form the C-terminus of the beta chain, while the remainder of the serine residue undergoes an oxidative deamination to produce ammonia and the pyruvoyl prosthetic group on the alpha chain.

Its subcellular location is the cell membrane. The enzyme catalyses a 1,2-diacyl-sn-glycero-3-phospho-L-serine + H(+) = a 1,2-diacyl-sn-glycero-3-phosphoethanolamine + CO2. The protein operates within phospholipid metabolism; phosphatidylethanolamine biosynthesis; phosphatidylethanolamine from CDP-diacylglycerol: step 2/2. Functionally, catalyzes the formation of phosphatidylethanolamine (PtdEtn) from phosphatidylserine (PtdSer). In Cupriavidus metallidurans (strain ATCC 43123 / DSM 2839 / NBRC 102507 / CH34) (Ralstonia metallidurans), this protein is Phosphatidylserine decarboxylase proenzyme.